Here is a 151-residue protein sequence, read N- to C-terminus: Transcriptional regulator MraZ (151 aa).

SpoVT-AbrB domains lie at 5–51 and 81–124; these read AHEL…PVAE and AEIL…GREQ.

It belongs to the MraZ family. Forms oligomers.

Its subcellular location is the cytoplasm. The protein localises to the nucleoid. This Neisseria gonorrhoeae (strain ATCC 700825 / FA 1090) protein is Transcriptional regulator MraZ.